Here is a 1029-residue protein sequence, read N- to C-terminus: MPPIPHVRPENVLRRAEELIAVGQPAAALSVLHEHVTSKRSRSSPIASLEPVMLLFVELCVDLRKGKSAKDGLYQYKNIAQNTNVGTIEMVLKKFIELAEQKVTEAQAKADEIQSSLESAAPTSNVEDLDAIETPETILLATVSGEQSRDRTDRAVVTPWLKFLWETYRTVLEILKNNARLEVMYQATALQAFQFCLKYTRKTEFRRLCELLRNHVQNAAKYSAQMHAINLSDPDTLQRHLDTRFQQLNVAVELELWQEGFRSVEDIHTLLNLSKRQPKNIMMANYYEKLTKIFMVSDNYLFHAAAWNRYYNLLRQSAIALAAGQGSKKDSPSVTEADMTKAASFVLLSALSIPVISTSRSRGALVDVDEVRKNKNTRLTNLLGMPQPPTRASLFKDALNKGLLSRCRPEIRDLYNILEVDFHPLSICKKISPILKEIGADPEMEKYVLPLQQVILTRLFQQLSQVYESVELKFVHELAHFPEPFQVTSSMIEKFIMNGCKKGDLAIRVDHVSGVLTFESDIFSSAKALHPGSAAGSAESEVGSVQRLQSTPAEIARSQLARLAKTLHVTCMYVDPSYNQARIKAKEAAHARARAGAAKEHEETLTRRAIIEKRKEALSDALQKKQREEENRKRARNQQLQEAEQQRLLDEHRERERKRMKDEQDRIRQQELKKQLEELKTGVKGIDVNQIDLEELDSNRLRAIKLAQLEKEKNDLNEKIRITSKRIDHLERAFRREELKHLPEDYETQKKQDLETYEQTKEETLKAARQKHKEDVALKHRLSRLVPYFNDFKKSVTEKRHEEFERRRKAADREFEQKKKQRIKEVHERIRRERAEREAEEQRRREEEERIAREEQERIAKEEERRRALAEEKAAREEQRRKLDEQAIRQRQREEEAEQRRAARKAGLAEPRGPAREASPERTAPRLNLAGRTGTSWRDRQAAKAAASAGEQPAAAQEATPAPPAKAGSYLPPHLRATRDGPSDSRDLSHARESAAPPRQFSRSPVPPSGAPSSQEKPGPWRPRFKQQQ.

Positions 92-121 form a coiled coil; that stretch reads LKKFIELAEQKVTEAQAKADEIQSSLESAA. The PCI domain maps to 339 to 523; sequence MTKAASFVLL…GVLTFESDIF (185 aa). Residues 606-903 adopt a coiled-coil conformation; it reads TRRAIIEKRK…EEEAEQRRAA (298 aa). Composition is skewed to basic and acidic residues over residues 621–632, 644–666, 797–901, and 913–924; these read ALQKKQREEENR, EQQR…EQDR, TEKR…EQRR, and GPAREASPERTA. Disordered stretches follow at residues 621–666 and 797–1029; these read ALQK…EQDR and TEKR…KQQQ. A compositionally biased stretch (low complexity) spans 943–960; it reads AKAAASAGEQPAAAQEAT. The segment covering 977-993 has biased composition (basic and acidic residues); the sequence is ATRDGPSDSRDLSHARE.

The protein belongs to the eIF-3 subunit A family. As to quaternary structure, component of the eukaryotic translation initiation factor 3 (eIF-3) complex.

It localises to the cytoplasm. In terms of biological role, RNA-binding component of the eukaryotic translation initiation factor 3 (eIF-3) complex, which is involved in protein synthesis of a specialized repertoire of mRNAs and, together with other initiation factors, stimulates binding of mRNA and methionyl-tRNAi to the 40S ribosome. The eIF-3 complex specifically targets and initiates translation of a subset of mRNAs involved in cell proliferation. The chain is Eukaryotic translation initiation factor 3 subunit A from Coccidioides immitis (strain RS) (Valley fever fungus).